Here is a 280-residue protein sequence, read N- to C-terminus: Mitochondrial outer membrane protein porin 2 (280 aa).

This sequence belongs to the eukaryotic mitochondrial porin (TC 1.B.8.1) family. As to expression, expressed in roots, stems, leaves, palea, lemma and pollen.

Its subcellular location is the mitochondrion outer membrane. In terms of biological role, forms a channel through the mitochondrial outer membrane that allows diffusion of small hydrophilic molecules. The channel adopts an open conformation at low or zero membrane potential and a closed conformation at potentials above 30-40 mV. The open state has a weak anion selectivity whereas the closed state is cation-selective. In Oryza sativa subsp. japonica (Rice), this protein is Mitochondrial outer membrane protein porin 2 (VDAC2).